Reading from the N-terminus, the 498-residue chain is ATP synthase subunit beta, chloroplastic (498 aa).

Residue 172–179 (GGAGVGKT) coordinates ATP.

The protein belongs to the ATPase alpha/beta chains family. F-type ATPases have 2 components, CF(1) - the catalytic core - and CF(0) - the membrane proton channel. CF(1) has five subunits: alpha(3), beta(3), gamma(1), delta(1), epsilon(1). CF(0) has four main subunits: a(1), b(1), b'(1) and c(9-12).

Its subcellular location is the plastid. It localises to the chloroplast thylakoid membrane. The enzyme catalyses ATP + H2O + 4 H(+)(in) = ADP + phosphate + 5 H(+)(out). Its function is as follows. Produces ATP from ADP in the presence of a proton gradient across the membrane. The catalytic sites are hosted primarily by the beta subunits. This chain is ATP synthase subunit beta, chloroplastic, found in Asarum canadense (Wild ginger).